A 215-amino-acid polypeptide reads, in one-letter code: Redox-sensing transcriptional repressor Rex (215 aa).

The segment at residues 18–57 is a DNA-binding region (H-T-H motif); that stretch reads LYYRFLKNLHASGKQRVSSAELSDAVKVDSATIRRDFSYF. An NAD(+)-binding site is contributed by 92–97; that stretch reads GVGNLG.

This sequence belongs to the transcriptional regulatory Rex family. As to quaternary structure, homodimer.

Its subcellular location is the cytoplasm. Its function is as follows. Modulates transcription in response to changes in cellular NADH/NAD(+) redox state. The sequence is that of Redox-sensing transcriptional repressor Rex from Bacillus velezensis (strain DSM 23117 / BGSC 10A6 / LMG 26770 / FZB42) (Bacillus amyloliquefaciens subsp. plantarum).